We begin with the raw amino-acid sequence, 394 residues long: Serine palmitoyltransferase (394 aa).

Pyridoxal 5'-phosphate contacts are provided by residues 111 to 112, Ser-183, His-211, and Thr-239; that span reads GF. Position 242 is an N6-(pyridoxal phosphate)lysine (Lys-242).

It belongs to the class-II pyridoxal-phosphate-dependent aminotransferase family. Pyridoxal 5'-phosphate serves as cofactor.

The catalysed reaction is L-serine + hexadecanoyl-CoA + H(+) = 3-oxosphinganine + CO2 + CoA. Its pathway is lipid metabolism; sphingolipid metabolism. In terms of biological role, involved in de novo bacterial ceramide synthesis. Catalyzes the condensation of L-serine with palmitoyl-CoA (hexadecanoyl-CoA) to produce 3-oxosphinganine. Also capable of using alanine as substrate leading to the formation of 1-deoxysphinganine (1-deoxySa). Contributes to the levels of endogenous sphingolipids in its host. This is Serine palmitoyltransferase from Bacteroides ovatus (strain ATCC 8483 / DSM 1896 / JCM 5824 / BCRC 10623 / CCUG 4943 / NCTC 11153).